We begin with the raw amino-acid sequence, 425 residues long: L-lysine 2,3-aminomutase (425 aa).

Residues 113 to 325 enclose the Radical SAM core domain; the sequence is HRYPDRVLLL…GLRGHTSGYA (213 aa). Positions 127, 131, and 134 each coordinate [4Fe-4S] cluster. Lysine 339 is modified (N6-(pyridoxal phosphate)lysine).

It belongs to the radical SAM superfamily. KamA family. In terms of assembly, homotetramer. Requires [4Fe-4S] cluster as cofactor. The cofactor is pyridoxal 5'-phosphate.

The catalysed reaction is L-lysine = (3S)-3,6-diaminohexanoate. It participates in amino-acid degradation; L-lysine degradation via acetate pathway. Catalyzes the interconversion of L-alpha-lysine and L-beta-lysine. The polypeptide is L-lysine 2,3-aminomutase (Fusobacterium nucleatum subsp. nucleatum (strain ATCC 25586 / DSM 15643 / BCRC 10681 / CIP 101130 / JCM 8532 / KCTC 2640 / LMG 13131 / VPI 4355)).